The primary structure comprises 955 residues: uncharacterized protein (955 aa).

Positions 1–24 (MQSSLIKILGVLAIVATLVCFVFA) are cleaved as a signal peptide. Residues 127 to 146 (STRPGKSNLDDNGKMIPIPR) are disordered. Helical transmembrane passes span 597–617 (IKAL…LGFA), 707–727 (LGLS…IVII), 739–759 (AFMA…FLLF), 781–801 (VVLM…LDFV), 818–838 (FIGT…INWF), and 857–877 (IVAL…SGNM). Positions 905 to 955 (LSQVGMDEKTRKGITGRAKERLKQRNETLKQAEKTRKNAPKEEPPKAEIPK) are disordered. Over residues 910–955 (MDEKTRKGITGRAKERLKQRNETLKQAEKTRKNAPKEEPPKAEIPK) the composition is skewed to basic and acidic residues.

Belongs to the TrbL/VirB6 family.

Its subcellular location is the cell membrane. This is an uncharacterized protein from Rickettsia bellii (strain RML369-C).